Reading from the N-terminus, the 280-residue chain is Phosphatidylglycerol--prolipoprotein diacylglyceryl transferase (280 aa).

4 helical membrane passes run 23-43 (LRWY…LAGV), 58-78 (LLFW…VLFY), 93-113 (IWTG…ALWW), and 120-140 (CTFL…LGAG). Arginine 141 provides a ligand contact to a 1,2-diacyl-sn-glycero-3-phospho-(1'-sn-glycerol). 3 consecutive transmembrane segments (helical) span residues 173–193 (PSQL…LWLY), 200–220 (IGAV…FVEF), and 241–261 (QGQI…VWAV).

This sequence belongs to the Lgt family.

The protein resides in the cell inner membrane. It carries out the reaction L-cysteinyl-[prolipoprotein] + a 1,2-diacyl-sn-glycero-3-phospho-(1'-sn-glycerol) = an S-1,2-diacyl-sn-glyceryl-L-cysteinyl-[prolipoprotein] + sn-glycerol 1-phosphate + H(+). It participates in protein modification; lipoprotein biosynthesis (diacylglyceryl transfer). In terms of biological role, catalyzes the transfer of the diacylglyceryl group from phosphatidylglycerol to the sulfhydryl group of the N-terminal cysteine of a prolipoprotein, the first step in the formation of mature lipoproteins. This Pseudoalteromonas atlantica (strain T6c / ATCC BAA-1087) protein is Phosphatidylglycerol--prolipoprotein diacylglyceryl transferase.